The primary structure comprises 171 residues: Ribosome maturation factor RimM (171 aa).

The PRC barrel domain occupies 97–170 (EGEYYYHEII…LVTIHVMEGL (74 aa)).

The protein belongs to the RimM family. In terms of assembly, binds ribosomal protein uS19.

The protein resides in the cytoplasm. Functionally, an accessory protein needed during the final step in the assembly of 30S ribosomal subunit, possibly for assembly of the head region. Essential for efficient processing of 16S rRNA. May be needed both before and after RbfA during the maturation of 16S rRNA. It has affinity for free ribosomal 30S subunits but not for 70S ribosomes. In Bacillus cereus (strain ATCC 14579 / DSM 31 / CCUG 7414 / JCM 2152 / NBRC 15305 / NCIMB 9373 / NCTC 2599 / NRRL B-3711), this protein is Ribosome maturation factor RimM.